We begin with the raw amino-acid sequence, 323 residues long: Putative CRISPR-associated protein SSO1401 (323 aa).

As to quaternary structure, sometimes seen associated with the aCascade ribonucleoprotein complex, minimally composed of Csa2 and Cas5a, which binds crRNA. Other probable components of aCascade in strain P1 are Cas6 and Csa5, while SSO1399, Cas5b (SSO1400) and SSO1401 have sometimes been seen weakly associated. The Csa2-Cas5a-crRNA complex also binds target DNA homologous to crRNA, probably forming an R-loop. Purified aCascade forms a filament about 6 nm in width.

Functionally, CRISPR (clustered regularly interspaced short palindromic repeat) is an adaptive immune system that provides protection against mobile genetic elements (viruses, transposable elements and conjugative plasmids). CRISPR clusters contain spacers, sequences complementary to antecedent mobile elements, and target invading nucleic acids. CRISPR clusters are transcribed and processed into CRISPR RNA (crRNA). This is Putative CRISPR-associated protein SSO1401 from Saccharolobus solfataricus (strain ATCC 35092 / DSM 1617 / JCM 11322 / P2) (Sulfolobus solfataricus).